The following is a 208-amino-acid chain: 3-demethoxyubiquinol 3-hydroxylase (208 aa).

Glutamate 57, glutamate 87, histidine 90, glutamate 139, glutamate 171, and histidine 174 together coordinate Fe cation.

It belongs to the COQ7 family. The cofactor is Fe cation.

Its subcellular location is the cell membrane. It carries out the reaction a 5-methoxy-2-methyl-3-(all-trans-polyprenyl)benzene-1,4-diol + AH2 + O2 = a 3-demethylubiquinol + A + H2O. Its pathway is cofactor biosynthesis; ubiquinone biosynthesis. In terms of biological role, catalyzes the hydroxylation of 2-nonaprenyl-3-methyl-6-methoxy-1,4-benzoquinol during ubiquinone biosynthesis. The sequence is that of 3-demethoxyubiquinol 3-hydroxylase from Nitrosospira multiformis (strain ATCC 25196 / NCIMB 11849 / C 71).